Consider the following 463-residue polypeptide: Bifunctional protein HldE (463 aa).

The interval 1-311 (MKKILVVGDL…EEIALILNQT (311 aa)) is ribokinase. 191–194 (NRFE) is a binding site for ATP. D260 is a catalytic residue. Residues 334 to 463 (FTNGCFDLLH…IEKIKRTCND (130 aa)) form a cytidylyltransferase region.

In the N-terminal section; belongs to the carbohydrate kinase PfkB family. The protein in the C-terminal section; belongs to the cytidylyltransferase family. As to quaternary structure, homodimer.

It carries out the reaction D-glycero-beta-D-manno-heptose 7-phosphate + ATP = D-glycero-beta-D-manno-heptose 1,7-bisphosphate + ADP + H(+). It catalyses the reaction D-glycero-beta-D-manno-heptose 1-phosphate + ATP + H(+) = ADP-D-glycero-beta-D-manno-heptose + diphosphate. It participates in nucleotide-sugar biosynthesis; ADP-L-glycero-beta-D-manno-heptose biosynthesis; ADP-L-glycero-beta-D-manno-heptose from D-glycero-beta-D-manno-heptose 7-phosphate: step 1/4. The protein operates within nucleotide-sugar biosynthesis; ADP-L-glycero-beta-D-manno-heptose biosynthesis; ADP-L-glycero-beta-D-manno-heptose from D-glycero-beta-D-manno-heptose 7-phosphate: step 3/4. Functionally, catalyzes the phosphorylation of D-glycero-D-manno-heptose 7-phosphate at the C-1 position to selectively form D-glycero-beta-D-manno-heptose-1,7-bisphosphate. Its function is as follows. Catalyzes the ADP transfer from ATP to D-glycero-beta-D-manno-heptose 1-phosphate, yielding ADP-D-glycero-beta-D-manno-heptose. This chain is Bifunctional protein HldE, found in Helicobacter pylori (strain G27).